An 81-amino-acid chain; its full sequence is ATP synthase subunit C, plastid (81 aa).

The next 2 helical transmembrane spans lie at 3–23 (PIIS…ASIG) and 57–77 (LAFM…LLFA).

The protein belongs to the ATPase C chain family. In terms of assembly, F-type ATPases have 2 components, F(1) - the catalytic core - and F(0) - the membrane proton channel. F(1) has five subunits: alpha(3), beta(3), gamma(1), delta(1), epsilon(1). F(0) has four main subunits: a(1), b(1), b'(1) and c(10-14). The alpha and beta chains form an alternating ring which encloses part of the gamma chain. F(1) is attached to F(0) by a central stalk formed by the gamma and epsilon chains, while a peripheral stalk is formed by the delta, b and b' chains.

It is found in the plastid membrane. F(1)F(0) ATP synthase produces ATP from ADP in the presence of a proton or sodium gradient. F-type ATPases consist of two structural domains, F(1) containing the extramembraneous catalytic core and F(0) containing the membrane proton channel, linked together by a central stalk and a peripheral stalk. During catalysis, ATP synthesis in the catalytic domain of F(1) is coupled via a rotary mechanism of the central stalk subunits to proton translocation. Its function is as follows. Key component of the F(0) channel; it plays a direct role in translocation across the membrane. A homomeric c-ring of between 10-14 subunits forms the central stalk rotor element with the F(1) delta and epsilon subunits. In Cuscuta gronovii (Common dodder), this protein is ATP synthase subunit C, plastid.